The following is a 155-amino-acid chain: Pathogenesis-related protein 2 (155 aa).

Belongs to the BetVI family.

The chain is Pathogenesis-related protein 2 from Phaseolus vulgaris (Kidney bean).